We begin with the raw amino-acid sequence, 54 residues long: Ovomucoid (54 aa).

One can recognise a Kazal-like domain in the interval 4–54 (VDCSEYPKPACTLEHRPLCGSDNKTYGNKCNFCNAVVESNGTLTLSHFGKC). Disulfide bonds link Cys6-Cys36, Cys14-Cys33, and Cys22-Cys54. N-linked (GlcNAc...) asparagine glycosylation occurs at Asn43.

Its subcellular location is the secreted. The chain is Ovomucoid from Pavo muticus (Green peafowl).